The sequence spans 400 residues: Lysophospholipid transporter LplT (400 aa).

12 consecutive transmembrane segments (helical) span residues 19-39 (VIVAQFLSAFGDNALLFATLA), 53-73 (VLQMVFVGAYILFAPFVGQIA), 91-111 (AGAAGICLGVNPFVGYTLVGI), 139-159 (LMEASTIAAILLGSVAGGVLA), 164-184 (IAALVACALAYAGAVAANLFI), 195-213 (SWRLSAMTRSFFSACVVLW), 227-247 (LFWGAGVTLRFLLVLWVPVAL), 257-277 (YLNAMVAVGIVVGAGAAAKLV), 281-301 (TVSRCMPAGILIGVVVAIFSL), 304-324 (ALLPAYALLLLIGMLGGFFVV), 352-372 (NSAMLLMLGLYSLAVLVGVPA), and 373-393 (VAIGIGFGVLFALAIAALWIW).

The protein belongs to the major facilitator superfamily. LplT (TC 2.A.1.42) family.

The protein resides in the cell inner membrane. Functionally, catalyzes the facilitated diffusion of 2-acyl-glycero-3-phosphoethanolamine (2-acyl-GPE) into the cell. This chain is Lysophospholipid transporter LplT, found in Salmonella heidelberg (strain SL476).